Reading from the N-terminus, the 322-residue chain is Cytochrome c biogenesis protein CcsA (322 aa).

7 helical membrane-spanning segments follow: residues 2–22, 44–64, 68–88, 143–163, 226–246, 260–274, and 289–309; these read LFATLEHILTHISFSTISIVI, GMIATFFSITGFLVSRWLSSG, LSNLYESLIFLSWALYILHTI, MLLSYATLLCGSLLSAAILII, VISLGFTLLTIGILCGAVWAN, TWAFITWTIFAIYLH, and VASIGFLIIWICYFGINLLGI.

Belongs to the CcmF/CycK/Ccl1/NrfE/CcsA family. In terms of assembly, may interact with Ccs1.

Its subcellular location is the plastid. It is found in the chloroplast thylakoid membrane. Functionally, required during biogenesis of c-type cytochromes (cytochrome c6 and cytochrome f) at the step of heme attachment. This Brachypodium distachyon (Purple false brome) protein is Cytochrome c biogenesis protein CcsA.